We begin with the raw amino-acid sequence, 318 residues long: tRNA U34 carboxymethyltransferase (318 aa).

Residues lysine 85, tryptophan 99, lysine 104, glycine 124, 175–176, methionine 190, tyrosine 194, and arginine 311 each bind carboxy-S-adenosyl-L-methionine; that span reads LD.

This sequence belongs to the class I-like SAM-binding methyltransferase superfamily. CmoB family. As to quaternary structure, homotetramer.

The enzyme catalyses carboxy-S-adenosyl-L-methionine + 5-hydroxyuridine(34) in tRNA = 5-carboxymethoxyuridine(34) in tRNA + S-adenosyl-L-homocysteine + H(+). Functionally, catalyzes carboxymethyl transfer from carboxy-S-adenosyl-L-methionine (Cx-SAM) to 5-hydroxyuridine (ho5U) to form 5-carboxymethoxyuridine (cmo5U) at position 34 in tRNAs. The polypeptide is tRNA U34 carboxymethyltransferase (Ruthia magnifica subsp. Calyptogena magnifica).